Reading from the N-terminus, the 204-residue chain is Spermatogenesis-associated protein 46 (204 aa).

A disordered region spans residues 101-120 (SSSSQENTYPREANRKSKHG).

Testis-specific.

It is found in the nucleus membrane. In terms of biological role, plays a role in spermiogenesis and fertilization. The polypeptide is Spermatogenesis-associated protein 46 (Spata46) (Mus musculus (Mouse)).